The following is an 88-amino-acid chain: MVPLCQVEVLYFAKSAEITGVRSETISVPQEIKALQLWKEIETRHPGLADVRNQIIFAVRQEYVELGDQLLVLQPGDEIAVIPPISGG.

A 1-thioglycine; alternate modification is found at Gly-88. Residue Gly-88 is modified to Glycyl adenylate; alternate.

Belongs to the MoaD family. MOCS2A subfamily. As to quaternary structure, heterotetramer; composed of 2 small (MOCS2A) and 2 large (MOCS2B) subunits. Post-translationally, C-terminal thiocarboxylation occurs in 2 steps, it is first acyl-adenylated (-COAMP) via the hesA/moeB/thiF part of MOCS3, then thiocarboxylated (-COSH) via the rhodanese domain of MOCS3. Widely expressed. Highest levels are found in heart and skeletal muscle. Lower levels are present in brain, kidney and pancreas. Very low levels are found in lung and peripheral blood leukocytes.

It localises to the cytoplasm. The protein resides in the cytosol. It participates in cofactor biosynthesis; molybdopterin biosynthesis. Acts as a sulfur carrier required for molybdopterin biosynthesis. Component of the molybdopterin synthase complex that catalyzes the conversion of precursor Z into molybdopterin by mediating the incorporation of 2 sulfur atoms into precursor Z to generate a dithiolene group. In the complex, serves as sulfur donor by being thiocarboxylated (-COSH) at its C-terminus by MOCS3. After interaction with MOCS2B, the sulfur is then transferred to precursor Z to form molybdopterin. The polypeptide is Molybdopterin synthase sulfur carrier subunit (Homo sapiens (Human)).